Here is a 118-residue protein sequence, read N- to C-terminus: Large ribosomal subunit protein bL19 (118 aa).

It belongs to the bacterial ribosomal protein bL19 family.

In terms of biological role, this protein is located at the 30S-50S ribosomal subunit interface and may play a role in the structure and function of the aminoacyl-tRNA binding site. This Campylobacter hominis (strain ATCC BAA-381 / DSM 21671 / CCUG 45161 / LMG 19568 / NCTC 13146 / CH001A) protein is Large ribosomal subunit protein bL19.